We begin with the raw amino-acid sequence, 281 residues long: Putrescine transport system permease protein PotI (281 aa).

Residues 1–13 (MNNLPVVRSPWRI) are Cytoplasmic-facing. Residues 14 to 33 (VILLLGFTFLYAPMLMLVIY) traverse the membrane as a helical segment. The Periplasmic segment spans residues 34–68 (SFNSSKLVTVWAGWSTRWYGELLRDDAMMSAVGLS). One can recognise an ABC transmembrane type-1 domain in the interval 65 to 260 (VGLSLTIAAC…GAVGIVGFIA (196 aa)). The chain crosses the membrane as a helical span at residues 69-88 (LTIAACAATAAAILGTIAAV). Over 89–115 (VLVRFGRFRGSNGFAFMITAPLVMPDV) the chain is Cytoplasmic. A helical membrane pass occupies residues 116 to 135 (ITGLSLLLLFVALAHAIGWP). The Periplasmic segment spans residues 136-140 (ADRGM). The helical transmembrane segment at 141 to 160 (LTIWLAHVTFCTAYVAVVIS) threads the bilayer. Residues 161–186 (SRLRELDRSIEEAAMDLGATPLKVFF) are Cytoplasmic-facing. A helical transmembrane segment spans residues 187 to 206 (VITLPMIMPAIISGWLLAFT). Topologically, residues 207 to 243 (LSLDDLVIASFVSGPGATTLPMLVFSSVRMGVNPEIN) are periplasmic. Residues 244–263 (ALATLILGAVGIVGFIAWYL) traverse the membrane as a helical segment. At 264 to 281 (MARAEKQRIRDIQRARRG) the chain is on the cytoplasmic side.

It belongs to the binding-protein-dependent transport system permease family. CysTW subfamily. The complex is composed of two ATP-binding proteins (PotG), two transmembrane proteins (PotH and PotI) and a solute-binding protein (PotF).

It is found in the cell inner membrane. In terms of biological role, part of the ABC transporter complex PotFGHI involved in putrescine uptake. Responsible for the translocation of the substrate across the membrane. The chain is Putrescine transport system permease protein PotI from Escherichia coli O6:H1 (strain CFT073 / ATCC 700928 / UPEC).